The primary structure comprises 526 residues: Glucose-6-phosphate isomerase (526 aa).

The active-site Proton donor is glutamate 343. Active-site residues include histidine 374 and lysine 494.

Belongs to the GPI family.

It is found in the cytoplasm. It carries out the reaction alpha-D-glucose 6-phosphate = beta-D-fructose 6-phosphate. The protein operates within carbohydrate biosynthesis; gluconeogenesis. It functions in the pathway carbohydrate degradation; glycolysis; D-glyceraldehyde 3-phosphate and glycerone phosphate from D-glucose: step 2/4. Its function is as follows. Catalyzes the reversible isomerization of glucose-6-phosphate to fructose-6-phosphate. In Dechloromonas aromatica (strain RCB), this protein is Glucose-6-phosphate isomerase.